Here is a 327-residue protein sequence, read N- to C-terminus: Delta(3,5)-Delta(2,4)-dienoyl-CoA isomerase, mitochondrial (327 aa).

The N-terminal 33 residues, 1–33, are a transit peptide targeting the mitochondrion; sequence MATAMTVSSKLRGLLMQQLRGTSQLYFNISLRS. 115-119 serves as a coordination point for substrate; the sequence is SGIDL. Position 147 is an N6-acetyllysine (lysine 147). Glycine 173 contributes to the substrate binding site. The residue at position 230 (lysine 230) is an N6-succinyllysine. Phosphoserine is present on serine 267. Lysine 316 carries the post-translational modification N6-succinyllysine. Residues 325–327 carry the Microbody targeting signal motif; that stretch reads SKL. Residue lysine 326 is modified to N6-acetyllysine.

Belongs to the enoyl-CoA hydratase/isomerase family. As to quaternary structure, homohexamer.

The protein resides in the mitochondrion. Its subcellular location is the peroxisome. The enzyme catalyses (3E,5Z)-octadienoyl-CoA = (2E,4E)-octadienoyl-CoA. The catalysed reaction is (3E,5Z,8Z,11Z,14Z)-eicosapentaenoyl-CoA = (2E,4E,8Z,11Z,14Z)-eicosapentaenoyl-CoA. It functions in the pathway lipid metabolism; fatty acid beta-oxidation. Functionally, isomerization of 3-trans,5-cis-dienoyl-CoA to 2-trans,4-trans-dienoyl-CoA. The chain is Delta(3,5)-Delta(2,4)-dienoyl-CoA isomerase, mitochondrial from Mus musculus (Mouse).